The chain runs to 185 residues: Ribosome-recycling factor (185 aa).

The protein belongs to the RRF family.

Its subcellular location is the cytoplasm. In terms of biological role, responsible for the release of ribosomes from messenger RNA at the termination of protein biosynthesis. May increase the efficiency of translation by recycling ribosomes from one round of translation to another. The polypeptide is Ribosome-recycling factor (Hydrogenovibrio crunogenus (strain DSM 25203 / XCL-2) (Thiomicrospira crunogena)).